A 439-amino-acid chain; its full sequence is Testican-1 (439 aa).

Residues 1 to 21 (MPAIAVLAAAAAAWCFLQVES) form the signal peptide. Cystine bridges form between C86–C97, C91–C107, C136–C166, C139–C159, and C148–C180. One can recognise a Kazal-like domain in the interval 130–182 (PSNLVKCKPCPVAQSAMVCGSDGHSYTSKCKLEFHACSTGKSLATLCDGPCPC). O-linked (GalNAc...) threonine glycosylation occurs at T228. The Thyroglobulin type-1 domain occupies 310 to 376 (GLPCQNEMNR…GSRKQGAVSC (67 aa)). 3 disulfide bridges follow: C313–C337, C348–C355, and C357–C376. Residues S383 and S388 are each glycosylated (O-linked (Xyl...) (glycosaminoglycan) serine). The tract at residues 415-439 (VHTRAVTEDDEDEDDDKEDEVGYIW) is disordered. Acidic residues predominate over residues 422-439 (EDDEDEDDDKEDEVGYIW).

Post-translationally, O-glycosylated. Glycosaminoglycan that contains chondroitin sulfate and heparan sulfate.

The protein localises to the secreted. Its subcellular location is the extracellular space. The protein resides in the extracellular matrix. In terms of biological role, may play a role in cell-cell and cell-matrix interactions. May contribute to various neuronal mechanisms in the central nervous system. In Homo sapiens (Human), this protein is Testican-1 (SPOCK1).